Reading from the N-terminus, the 943-residue chain is UvrABC system protein A (943 aa).

ATP is bound at residue 32 to 39; sequence GLSGSGKS. A C4-type zinc finger spans residues 251–278; it reads CPVCGFTVPELEPRLFSFNAPFGSCPTC. 2 consecutive ABC transporter domains span residues 308–589 and 609–937; these read WNPI…KKSI and GSGR…QYLK. 641–648 contributes to the ATP binding site; that stretch reads GVSGSGKS. The C4-type zinc-finger motif lies at 740-766; it reads CEACSGDGIIKIEMHFLPDVYVPCEVC.

It belongs to the ABC transporter superfamily. UvrA family. In terms of assembly, forms a heterotetramer with UvrB during the search for lesions.

The protein resides in the cytoplasm. Functionally, the UvrABC repair system catalyzes the recognition and processing of DNA lesions. UvrA is an ATPase and a DNA-binding protein. A damage recognition complex composed of 2 UvrA and 2 UvrB subunits scans DNA for abnormalities. When the presence of a lesion has been verified by UvrB, the UvrA molecules dissociate. In Streptococcus mutans serotype c (strain ATCC 700610 / UA159), this protein is UvrABC system protein A.